We begin with the raw amino-acid sequence, 79 residues long: D-alanyl carrier protein (79 aa).

A Carrier domain is found at 1-76 (MKEQIFDIIE…KIAARVQEKK (76 aa)). An O-(pantetheine 4'-phosphoryl)serine modification is found at Ser34.

The protein belongs to the DltC family. In terms of processing, 4'-phosphopantetheine is transferred from CoA to a specific serine of apo-DCP.

The protein resides in the cytoplasm. The protein operates within cell wall biogenesis; lipoteichoic acid biosynthesis. Functionally, carrier protein involved in the D-alanylation of lipoteichoic acid (LTA). The loading of thioester-linked D-alanine onto DltC is catalyzed by D-alanine--D-alanyl carrier protein ligase DltA. The DltC-carried D-alanyl group is further transferred to cell membrane phosphatidylglycerol (PG) by forming an ester bond, probably catalyzed by DltD. D-alanylation of LTA plays an important role in modulating the properties of the cell wall in Gram-positive bacteria, influencing the net charge of the cell wall. This chain is D-alanyl carrier protein, found in Lactococcus lactis subsp. lactis (strain IL1403) (Streptococcus lactis).